The following is a 364-amino-acid chain: Probable cysteine protease RDL4 (364 aa).

The signal sequence occupies residues 1 to 23 (MGSAKSAMLILLVAMVIASCATA). The propeptide at 24–136 (IDMSVVSYDD…DRYKTSADDV (113 aa)) is activation peptide. N-linked (GlcNAc...) asparagine glycosylation occurs at N87. 3 cysteine pairs are disulfide-bonded: C158-C199, C192-C232, and C291-C342. The active site involves C161. Active-site residues include H297 and N317.

It belongs to the peptidase C1 family. As to expression, expressed in inflorescences.

Its function is as follows. Probable thiol protease. This chain is Probable cysteine protease RDL4, found in Arabidopsis thaliana (Mouse-ear cress).